A 409-amino-acid polypeptide reads, in one-letter code: Peptidase T (409 aa).

His78 is a Zn(2+) binding site. Asp80 is a catalytic residue. Asp140 is a binding site for Zn(2+). The active-site Proton acceptor is the Glu173. Zn(2+)-binding residues include Glu174, Asp196, and His379.

It belongs to the peptidase M20B family. It depends on Zn(2+) as a cofactor.

The protein resides in the cytoplasm. It catalyses the reaction Release of the N-terminal residue from a tripeptide.. Functionally, cleaves the N-terminal amino acid of tripeptides. This chain is Peptidase T, found in Escherichia coli O139:H28 (strain E24377A / ETEC).